Consider the following 92-residue polypeptide: UPF0298 protein BH2594 (92 aa).

The protein belongs to the UPF0298 family.

It localises to the cytoplasm. The polypeptide is UPF0298 protein BH2594 (Halalkalibacterium halodurans (strain ATCC BAA-125 / DSM 18197 / FERM 7344 / JCM 9153 / C-125) (Bacillus halodurans)).